Here is a 435-residue protein sequence, read N- to C-terminus: Glutamate-1-semialdehyde 2,1-aminomutase (435 aa).

Position 270 is an N6-(pyridoxal phosphate)lysine (Lys270).

The protein belongs to the class-III pyridoxal-phosphate-dependent aminotransferase family. HemL subfamily. As to quaternary structure, homodimer. Pyridoxal 5'-phosphate is required as a cofactor.

The protein localises to the cytoplasm. The enzyme catalyses (S)-4-amino-5-oxopentanoate = 5-aminolevulinate. It functions in the pathway porphyrin-containing compound metabolism; protoporphyrin-IX biosynthesis; 5-aminolevulinate from L-glutamyl-tRNA(Glu): step 2/2. This Wigglesworthia glossinidia brevipalpis protein is Glutamate-1-semialdehyde 2,1-aminomutase.